We begin with the raw amino-acid sequence, 486 residues long: Glycogen synthase 2 (486 aa).

Residue Lys-15 coordinates ADP-alpha-D-glucose.

Belongs to the glycosyltransferase 1 family. Bacterial/plant glycogen synthase subfamily.

It catalyses the reaction [(1-&gt;4)-alpha-D-glucosyl](n) + ADP-alpha-D-glucose = [(1-&gt;4)-alpha-D-glucosyl](n+1) + ADP + H(+). The protein operates within glycan biosynthesis; glycogen biosynthesis. Functionally, synthesizes alpha-1,4-glucan chains using ADP-glucose. In Rhizobium meliloti (strain 1021) (Ensifer meliloti), this protein is Glycogen synthase 2 (glgA2).